The chain runs to 124 residues: MLKSKIHRATITDACIDYEGSITIDKNLMQAANLLPYEQVHVVNVNNGTRLETYVIEGSAGSGQICLNGAAARMGMKGDKIIILGYSLITEEDTLIHQPNLVYVDALNRITKVKNGVANQGLEV.

The active-site Schiff-base intermediate with substrate; via pyruvic acid is the S21. The residue at position 21 (S21) is a Pyruvic acid (Ser). T53 serves as a coordination point for substrate. The Proton donor role is filled by Y54. Residue 69-71 coordinates substrate; that stretch reads GAA.

Belongs to the PanD family. In terms of assembly, heterooctamer of four alpha and four beta subunits. It depends on pyruvate as a cofactor. Post-translationally, is synthesized initially as an inactive proenzyme, which is activated by self-cleavage at a specific serine bond to produce a beta-subunit with a hydroxyl group at its C-terminus and an alpha-subunit with a pyruvoyl group at its N-terminus.

It is found in the cytoplasm. It catalyses the reaction L-aspartate + H(+) = beta-alanine + CO2. It participates in cofactor biosynthesis; (R)-pantothenate biosynthesis; beta-alanine from L-aspartate: step 1/1. Its function is as follows. Catalyzes the pyruvoyl-dependent decarboxylation of aspartate to produce beta-alanine. The sequence is that of Aspartate 1-decarboxylase from Dehalococcoides mccartyi (strain CBDB1).